We begin with the raw amino-acid sequence, 439 residues long: Xaa-Pro dipeptidase (439 aa).

The Mn(2+) site is built by Asp244, Asp255, His335, Glu380, and Glu419.

The protein belongs to the peptidase M24B family. Bacterial-type prolidase subfamily. Mn(2+) serves as cofactor.

It carries out the reaction Xaa-L-Pro dipeptide + H2O = an L-alpha-amino acid + L-proline. Splits dipeptides with a prolyl residue in the C-terminal position. This Shewanella oneidensis (strain ATCC 700550 / JCM 31522 / CIP 106686 / LMG 19005 / NCIMB 14063 / MR-1) protein is Xaa-Pro dipeptidase.